Here is a 300-residue protein sequence, read N- to C-terminus: MIVMDQIAAMQALMRQYRREGKTIGFVPTMGYLHEGHTSLIDRARAENDIVVLSVFVNPLQFGPNEDFARYPRDFERDRRIAEQHGVDVLFHPEADEMYPEPLTVRAIVQARADVLCGRSRPGHFDGVATVLMKLFNIVMPDRAYFGMKDAQQVAVVDGLIRDLNFPIELVPVPTVREADGLAKSSRNVYLSPQERSEAPALYAALQAAASAVERGERSAAAIRRMVREHIEAHTHAEIDYVEVCSYPDLTPLETLAGTVLIAVAVRFASARLIDNIMIELPKTGEQGDGKGEQACFARS.

30–37 serves as a coordination point for ATP; sequence MGYLHEGH. H37 serves as the catalytic Proton donor. Q61 provides a ligand contact to (R)-pantoate. Q61 serves as a coordination point for beta-alanine. Residue 147–150 coordinates ATP; it reads GMKD. Q153 is a (R)-pantoate binding site. Residues V176 and 184–187 contribute to the ATP site; that span reads KSSR.

It belongs to the pantothenate synthetase family. Homodimer.

It localises to the cytoplasm. The enzyme catalyses (R)-pantoate + beta-alanine + ATP = (R)-pantothenate + AMP + diphosphate + H(+). Its pathway is cofactor biosynthesis; (R)-pantothenate biosynthesis; (R)-pantothenate from (R)-pantoate and beta-alanine: step 1/1. In terms of biological role, catalyzes the condensation of pantoate with beta-alanine in an ATP-dependent reaction via a pantoyl-adenylate intermediate. The sequence is that of Pantothenate synthetase from Geobacillus kaustophilus (strain HTA426).